The sequence spans 222 residues: Large ribosomal subunit protein uL1 (222 aa).

This sequence belongs to the universal ribosomal protein uL1 family. As to quaternary structure, part of the 50S ribosomal subunit.

Functionally, binds directly to 23S rRNA. Probably involved in E site tRNA release. Its function is as follows. Protein L1 is also a translational repressor protein, it controls the translation of its operon by binding to its mRNA. The sequence is that of Large ribosomal subunit protein uL1 from Pyrobaculum islandicum (strain DSM 4184 / JCM 9189 / GEO3).